A 257-amino-acid chain; its full sequence is 3-methyl-2-oxobutanoate hydroxymethyltransferase (257 aa).

The Mg(2+) site is built by Asp-42 and Asp-81. 3-methyl-2-oxobutanoate contacts are provided by residues 42–43 (DS), Asp-81, and Lys-110. Residue Glu-112 participates in Mg(2+) binding. Glu-176 functions as the Proton acceptor in the catalytic mechanism.

It belongs to the PanB family. As to quaternary structure, homodecamer; pentamer of dimers. Mg(2+) serves as cofactor.

The protein localises to the cytoplasm. It carries out the reaction 3-methyl-2-oxobutanoate + (6R)-5,10-methylene-5,6,7,8-tetrahydrofolate + H2O = 2-dehydropantoate + (6S)-5,6,7,8-tetrahydrofolate. It functions in the pathway cofactor biosynthesis; (R)-pantothenate biosynthesis; (R)-pantoate from 3-methyl-2-oxobutanoate: step 1/2. Functionally, catalyzes the reversible reaction in which hydroxymethyl group from 5,10-methylenetetrahydrofolate is transferred onto alpha-ketoisovalerate to form ketopantoate. This chain is 3-methyl-2-oxobutanoate hydroxymethyltransferase, found in Pelagibacter ubique (strain HTCC1062).